A 774-amino-acid chain; its full sequence is Glycophorin-binding protein 130 (774 aa).

The PEXEL motif motif lies at 84–88 (RILAE). Disordered regions lie at residues 97–243 (EKTT…AADP), 256–291 (LTNT…EYAS), 310–334 (DPND…PEGQ), 358–383 (NTDP…DPEG), 410–434 (DPND…PEGQ), 458–481 (NTDP…SDPE), 509–533 (DPND…PEGQ), 609–632 (DPND…DPEG), 661–682 (NDEV…DPEG), and 709–734 (DPND…EGQI). Composition is skewed to basic and acidic residues over residues 117 to 140 (TKKD…SEKQ) and 174 to 198 (KKEE…EPKA). Residues 201-228 (VSQKPSTSTRSNNEVKIRAASNQETLTS) show a composition bias toward polar residues. 11 GBP repeats span residues 226 to 275 (LTSA…NKED), 276 to 325 (LTSA…NKED), 326 to 375 (LTSA…NKED), 376 to 425 (LTSA…NKED), 426 to 474 (LTSA…DNKE), 475 to 524 (LTSS…NKED), 525 to 574 (LTSA…NKEE), 575 to 624 (LTSS…NKED), 625 to 674 (LTSA…NKED), 675 to 724 (LTSA…NKED), and 725 to 774 (LTSA…NNEA). Basic and acidic residues-rich tracts occupy residues 264-276 (EVER…KEDL), 314-326 (DVER…KEDL), 364-376 (EVER…KEDL), 414-426 (EVER…KEDL), 464-476 (EVER…KELT), 513-525 (EVER…KEDL), 613-625 (EVER…KEDL), 663-675 (EVER…KEDL), and 713-725 (DVER…KEDL).

Interacts with host glycophorin.

The protein localises to the secreted. Its subcellular location is the cell surface. The protein resides in the host cytoplasm. Functionally, involved in merozoite invasion of host erythrocytes. This chain is Glycophorin-binding protein 130, found in Plasmodium falciparum (isolate FCR-3 / Gambia).